The sequence spans 602 residues: Potassium-transporting ATPase potassium-binding subunit (602 aa).

The next 4 membrane-spanning stretches (helical) occupy residues 5 to 25 (AMLQ…PLGA), 65 to 85 (GYAV…YALQ), 136 to 156 (GLTV…IALI), and 179 to 199 (LYVL…QGAI). The interval 221-248 (QDAKGNPVLGKDGKPVMEDKTSQTQTLP) is disordered. Residues 231 to 241 (KDGKPVMEDKT) are compositionally biased toward basic and acidic residues. A run of 6 helical transmembrane segments spans residues 283 to 303 (LANF…CFLF), 312 to 332 (QGWA…VVET), 419 to 439 (GLYG…LMVG), 458 to 478 (AITI…AVSL), 523 to 543 (IMTG…ILAI), and 566 to 586 (LFVT…YVPA).

This sequence belongs to the KdpA family. The system is composed of three essential subunits: KdpA, KdpB and KdpC.

Its subcellular location is the cell inner membrane. In terms of biological role, part of the high-affinity ATP-driven potassium transport (or Kdp) system, which catalyzes the hydrolysis of ATP coupled with the electrogenic transport of potassium into the cytoplasm. This subunit binds the periplasmic potassium ions and delivers the ions to the membrane domain of KdpB through an intramembrane tunnel. This is Potassium-transporting ATPase potassium-binding subunit from Chromobacterium violaceum (strain ATCC 12472 / DSM 30191 / JCM 1249 / CCUG 213 / NBRC 12614 / NCIMB 9131 / NCTC 9757 / MK).